The chain runs to 385 residues: Chaperone protein DnaJ (385 aa).

The J domain maps to 5–70 (DYYEVLGVAK…QKRAAYDRFG (66 aa)). The CR-type zinc-finger motif lies at 141–219 (GKTETIRIPT…CSGAGRVNRE (79 aa)). Residues cysteine 154, cysteine 157, cysteine 171, cysteine 174, cysteine 193, cysteine 196, cysteine 207, and cysteine 210 each contribute to the Zn(2+) site. CXXCXGXG motif repeat units lie at residues 154 to 161 (CETCSGTG), 171 to 178 (CSTCGGYG), 193 to 200 (CPNCHGRG), and 207 to 214 (CTACSGAG).

This sequence belongs to the DnaJ family. In terms of assembly, homodimer. Zn(2+) serves as cofactor.

It is found in the cytoplasm. Participates actively in the response to hyperosmotic and heat shock by preventing the aggregation of stress-denatured proteins and by disaggregating proteins, also in an autonomous, DnaK-independent fashion. Unfolded proteins bind initially to DnaJ; upon interaction with the DnaJ-bound protein, DnaK hydrolyzes its bound ATP, resulting in the formation of a stable complex. GrpE releases ADP from DnaK; ATP binding to DnaK triggers the release of the substrate protein, thus completing the reaction cycle. Several rounds of ATP-dependent interactions between DnaJ, DnaK and GrpE are required for fully efficient folding. Also involved, together with DnaK and GrpE, in the DNA replication of plasmids through activation of initiation proteins. This chain is Chaperone protein DnaJ, found in Methylorubrum extorquens (strain PA1) (Methylobacterium extorquens).